Here is a 52-residue protein sequence, read N- to C-terminus: MDLIRILIAILLPPLGVFLQVGFGGAFWLNILLTLLGYIPGIVHAVYIIAKR.

Helical transmembrane passes span 6–26 and 29–49; these read ILIAILLPPLGVFLQVGFGGA and LNILLTLLGYIPGIVHAVYII.

This sequence belongs to the UPF0057 (PMP3) family.

The protein localises to the cell membrane. This Pseudomonas aeruginosa (strain ATCC 15692 / DSM 22644 / CIP 104116 / JCM 14847 / LMG 12228 / 1C / PRS 101 / PAO1) protein is UPF0057 membrane protein PA0567.